Here is a 258-residue protein sequence, read N- to C-terminus: Alcohol dehydrogenase 2 (258 aa).

9-33 (IFVGGLGFIGYEACKQLMAKNMASF) provides a ligand contact to NAD(+). A substrate-binding site is contributed by S137. The Proton acceptor role is filled by Y150.

It belongs to the short-chain dehydrogenases/reductases (SDR) family. Homodimer.

The enzyme catalyses a primary alcohol + NAD(+) = an aldehyde + NADH + H(+). It catalyses the reaction a secondary alcohol + NAD(+) = a ketone + NADH + H(+). The protein is Alcohol dehydrogenase 2 (ADH2) of Ceratitis cosyra (Mango fruit fly).